Reading from the N-terminus, the 225-residue chain is Fibronectin type III domain-containing protein 10 (225 aa).

A signal peptide spans 1-19 (MRAPPLLLLLAACAPPSGA). Residues 20–181 (AVDPTPPGWE…FTAEPAAMQE (162 aa)) are Extracellular-facing. In terms of domain architecture, Fibronectin type-III spans 72–167 (LASAGGSLRA…ELAAAPPELA (96 aa)). N-linked (GlcNAc...) asparagine glycosylation is found at asparagine 86 and asparagine 109. A helical transmembrane segment spans residues 182–202 (IVVAMTAVGGSICVMLVVICL). Over 203-225 (LVAYITENLMHPTFRRPSLRRQP) the chain is Cytoplasmic.

Its subcellular location is the membrane. This is Fibronectin type III domain-containing protein 10 (Fndc10) from Rattus norvegicus (Rat).